Here is a 368-residue protein sequence, read N- to C-terminus: 3-isopropylmalate dehydrogenase (368 aa).

79–92 (GPRYEGLPWDLRPE) contributes to the NAD(+) binding site. Arg99, Arg109, Arg138, and Asp228 together coordinate substrate. Mg(2+) contacts are provided by Asp228, Asp252, and Asp256. 292-304 (GSAPDIAGQDRAN) lines the NAD(+) pocket.

It belongs to the isocitrate and isopropylmalate dehydrogenases family. LeuB type 1 subfamily. Homodimer. The cofactor is Mg(2+). It depends on Mn(2+) as a cofactor.

It is found in the cytoplasm. The catalysed reaction is (2R,3S)-3-isopropylmalate + NAD(+) = 4-methyl-2-oxopentanoate + CO2 + NADH. The protein operates within amino-acid biosynthesis; L-leucine biosynthesis; L-leucine from 3-methyl-2-oxobutanoate: step 3/4. Catalyzes the oxidation of 3-carboxy-2-hydroxy-4-methylpentanoate (3-isopropylmalate) to 3-carboxy-4-methyl-2-oxopentanoate. The product decarboxylates to 4-methyl-2 oxopentanoate. This is 3-isopropylmalate dehydrogenase from Symbiobacterium thermophilum (strain DSM 24528 / JCM 14929 / IAM 14863 / T).